Here is a 387-residue protein sequence, read N- to C-terminus: Putative F-box protein At1g47800 (387 aa).

The region spanning 8–54 (LQSLDHIPIDVLFEILVKLPAKSVARFLCVSKVWATMIRGEVFIRSF) is the F-box domain.

The polypeptide is Putative F-box protein At1g47800 (Arabidopsis thaliana (Mouse-ear cress)).